Consider the following 137-residue polypeptide: ATP synthase epsilon chain 1 (137 aa).

This sequence belongs to the ATPase epsilon chain family. In terms of assembly, F-type ATPases have 2 components, CF(1) - the catalytic core - and CF(0) - the membrane proton channel. CF(1) has five subunits: alpha(3), beta(3), gamma(1), delta(1), epsilon(1). CF(0) has three main subunits: a, b and c.

Its subcellular location is the cell inner membrane. In terms of biological role, produces ATP from ADP in the presence of a proton gradient across the membrane. The chain is ATP synthase epsilon chain 1 (atpC1) from Ralstonia nicotianae (strain ATCC BAA-1114 / GMI1000) (Ralstonia solanacearum).